We begin with the raw amino-acid sequence, 637 residues long: Interleukin-17 receptor E (637 aa).

The first 24 residues, 1-24 (MGSPRLAALLLSQPLLFICLAVSA), serve as a signal peptide directing secretion. Residues 25–415 (QVACPCLPRW…LCPDVSHRHL (391 aa)) lie on the Extracellular side of the membrane. N-linked (GlcNAc...) asparagine glycans are attached at residues N278 and N307. Residues 416 to 436 (GLLILALLGLTTLLGVVLVLF) form a helical membrane-spanning segment. Over 437 to 637 (CRRLLPGPGR…TNSPCGFSCL (201 aa)) the chain is Cytoplasmic. Positions 447–583 (TRPVLLLHAA…LLRDLPRLLR (137 aa)) constitute an SEFIR domain.

In terms of assembly, forms heterodimers with IL17RE; the heterodimer binds IL17C.

Its subcellular location is the cell membrane. In terms of biological role, specific functional receptor for IL17C, signaling through the NF-kappa-B and MAPK pathways. Requires TRAF3IP2 /ACT1 for signaling. Crucial regulator in innate immunity to bacterial pathogens. The sequence is that of Interleukin-17 receptor E (Il17re) from Rattus norvegicus (Rat).